A 722-amino-acid polypeptide reads, in one-letter code: Tudor domain-containing protein 3 (722 aa).

One can recognise a UBA domain in the interval 264–304; it reads LVDEKALRHITEMGFSKEASRQALMDNGNNLEAALNVLLNS. Disordered stretches follow at residues 305–342, 355–453, and 470–526; these read NKQK…SAPS, LSVE…RSYS, and SDTV…HFYD. At Ser-327 the chain carries Phosphoserine. Positions 362–388 are enriched in polar residues; that stretch reads SQPQQLHQGQNRVSNTEQNGVKDNNQP. Basic and acidic residues-rich tracts occupy residues 392–409 and 442–453; these read PRND…RFQR and AEERTKCDRSYS. Lys-541 is covalently cross-linked (Glycyl lysine isopeptide (Lys-Gly) (interchain with G-Cter in SUMO2)). The Tudor domain occupies 626 to 686; it reads LWKSGDECLA…RPIQSEAWEE (61 aa). The span at 695–704 shows a compositional bias: basic and acidic residues; it reads EFRRGGDGQP. Residues 695–722 are disordered; it reads EFRRGGDGQPRRSTRPTQQFYQPPRARN. Residues 702-722 are EBM motif; may mediate interaction with the EJC; sequence GQPRRSTRPTQQFYQPPRARN.

In terms of assembly, component of mRNA stress granules. Interacts with FMR1, FXR1, FXR2, EWSR1, FUS, SERBP1, EEF1A1 and DDX3X or DDX3Y, and with the small nuclear ribonucleoprotein-associated proteins SNRPB and SNRPN. Interacts with 'Lys-48'-linked tetra-ubiquitin, but not with monoubiquitin or 'Lys-63'-linked ubiquitin chains. May interact with the exon junction complex (EJC) composed at least of CASC3, EIF4A3, MAGOH and RBM8A. Interacts with POLR2A (via the C-terminal domain (CTD)).

It is found in the cytoplasm. Its subcellular location is the nucleus. Its function is as follows. Scaffolding protein that specifically recognizes and binds dimethylarginine-containing proteins. Plays a role in the regulation of translation of target mRNAs by binding Arg/Gly-rich motifs (GAR) in dimethylarginine-containing proteins. In nucleus, acts as a coactivator: recognizes and binds asymmetric dimethylation on the core histone tails associated with transcriptional activation (H3R17me2a and H4R3me2a) and recruits proteins at these arginine-methylated loci. In cytoplasm, acts as an antiviral factor that participates in the assembly of stress granules together with G3BP1. This chain is Tudor domain-containing protein 3 (TDRD3), found in Bos taurus (Bovine).